A 352-amino-acid chain; its full sequence is Chorismate synthase (352 aa).

Residues Arg48 and Arg54 each contribute to the NADP(+) site. FMN is bound by residues 125 to 127, 238 to 239, Gly278, 293 to 297, and Arg319; these read RSS, NA, and KPTSS.

Belongs to the chorismate synthase family. In terms of assembly, homotetramer. It depends on FMNH2 as a cofactor.

It carries out the reaction 5-O-(1-carboxyvinyl)-3-phosphoshikimate = chorismate + phosphate. The protein operates within metabolic intermediate biosynthesis; chorismate biosynthesis; chorismate from D-erythrose 4-phosphate and phosphoenolpyruvate: step 7/7. Functionally, catalyzes the anti-1,4-elimination of the C-3 phosphate and the C-6 proR hydrogen from 5-enolpyruvylshikimate-3-phosphate (EPSP) to yield chorismate, which is the branch point compound that serves as the starting substrate for the three terminal pathways of aromatic amino acid biosynthesis. This reaction introduces a second double bond into the aromatic ring system. This chain is Chorismate synthase, found in Bordetella petrii (strain ATCC BAA-461 / DSM 12804 / CCUG 43448).